The chain runs to 447 residues: Argininosuccinate synthase (447 aa).

ATP is bound by residues 20 to 28 and alanine 46; that span reads AFSGGLDTS. Tyrosine 102 contacts L-citrulline. Glycine 132 and threonine 134 together coordinate ATP. Positions 134, 138, and 139 each coordinate L-aspartate. Asparagine 138 contributes to the L-citrulline binding site. Position 139 (aspartate 139) interacts with ATP. Arginine 142 and serine 195 together coordinate L-citrulline. ATP is bound at residue aspartate 197. L-citrulline is bound by residues threonine 204, glutamate 206, and glutamate 283.

It belongs to the argininosuccinate synthase family. Type 2 subfamily. As to quaternary structure, homotetramer.

Its subcellular location is the cytoplasm. It catalyses the reaction L-citrulline + L-aspartate + ATP = 2-(N(omega)-L-arginino)succinate + AMP + diphosphate + H(+). It functions in the pathway amino-acid biosynthesis; L-arginine biosynthesis; L-arginine from L-ornithine and carbamoyl phosphate: step 2/3. This chain is Argininosuccinate synthase, found in Neisseria meningitidis serogroup C (strain 053442).